We begin with the raw amino-acid sequence, 197 residues long: 5'-deoxynucleotidase yfbR (197 aa).

Substrate-binding positions include 16–17 (RW) and His31. The HD domain occupies 28 to 140 (VSEHSLQVAF…VKQADALCAY (113 aa)). 3 residues coordinate a divalent metal cation: His31, His66, and Asp67. Residues Asp67, 75–78 (DLPT), and Asp135 contribute to the substrate site. Asp135 provides a ligand contact to a divalent metal cation.

The protein belongs to the 5DNU family. As to quaternary structure, homodimer. A divalent metal cation is required as a cofactor.

It is found in the cytoplasm. The catalysed reaction is a 2'-deoxyribonucleoside 5'-phosphate + H2O = a 2'-deoxyribonucleoside + phosphate. Functionally, catalyzes the strictly specific dephosphorylation of 2'-deoxyribonucleoside 5'-monophosphates. In Photorhabdus temperata, this protein is 5'-deoxynucleotidase yfbR.